Consider the following 552-residue polypeptide: CCR4-NOT transcription complex subunit 6 (552 aa).

4 LRR repeats span residues 52–73, 75–96, 98–120, and 121–143; these read HLTALHLSDNSLSCIPSDIAKL, NLVYLDLSHNQIQSLPAELGNM, SLRELHLNYNQLRVLPFELGKLF, and QLQTLSLKGNPLTQDILNLCLEP. Positions 153–552 are nuclease domain; sequence LLDNLSVSTE…VNGIHLPGRR (400 aa). A Mg(2+)-binding site is contributed by Glu-235. The substrate site is built by Glu-235, Glu-271, His-356, and Pro-361. Residue Asp-407 participates in Mg(2+) binding. Asp-407 functions as the Proton donor/acceptor in the catalytic mechanism. Substrate is bound by residues Asn-409, Asn-476, and Phe-481.

This sequence belongs to the CCR4/nocturin family. Subunit of the CCR4-NOT core complex. Mg(2+) serves as cofactor.

Its subcellular location is the cytoplasm. It localises to the nucleus. It catalyses the reaction Exonucleolytic cleavage of poly(A) to 5'-AMP.. Poly(A) nuclease involved in mRNA decay. Has 3'-5' RNase activity. The CCR4-NOT complex functions as a general transcription regulation complex. Enhances ligand-dependent transcriptional activity of nuclear hormone receptors. This is CCR4-NOT transcription complex subunit 6 (cnot6) from Xenopus laevis (African clawed frog).